The primary structure comprises 365 residues: Cobalt-precorrin-5B C(1)-methyltransferase (365 aa).

The protein belongs to the CbiD family.

The enzyme catalyses Co-precorrin-5B + S-adenosyl-L-methionine = Co-precorrin-6A + S-adenosyl-L-homocysteine. It participates in cofactor biosynthesis; adenosylcobalamin biosynthesis; cob(II)yrinate a,c-diamide from sirohydrochlorin (anaerobic route): step 6/10. Functionally, catalyzes the methylation of C-1 in cobalt-precorrin-5B to form cobalt-precorrin-6A. This Polaromonas naphthalenivorans (strain CJ2) protein is Cobalt-precorrin-5B C(1)-methyltransferase.